The primary structure comprises 319 residues: Guanidinobutyrase (319 aa).

Positions 129, 152, 154, 156, 243, and 245 each coordinate Mn(2+).

Belongs to the arginase family. Agmatinase subfamily. As to quaternary structure, homohexamer. Requires Mn(2+) as cofactor.

It catalyses the reaction 4-guanidinobutanoate + H2O = urea + 4-aminobutanoate. Catalyzes specifically the hydrolysis of 4-guanidinobutanoate to 4-aminobutanoate and urea. Has no activity against arginine, agmatine, 3-guanidinopropionate and guanidinoacetate. The protein is Guanidinobutyrase (gbuA) of Pseudomonas aeruginosa (strain ATCC 15692 / DSM 22644 / CIP 104116 / JCM 14847 / LMG 12228 / 1C / PRS 101 / PAO1).